The sequence spans 371 residues: tRNA (guanine(26)-N(2))-dimethyltransferase (371 aa).

The region spanning methionine 1–valine 370 is the Trm1 methyltransferase domain. Positions 36, 66, 81, 107, and 108 each coordinate S-adenosyl-L-methionine. Residues cysteine 238, cysteine 241, cysteine 258, and cysteine 261 each coordinate Zn(2+).

It belongs to the class I-like SAM-binding methyltransferase superfamily. Trm1 family.

It catalyses the reaction guanosine(26) in tRNA + 2 S-adenosyl-L-methionine = N(2)-dimethylguanosine(26) in tRNA + 2 S-adenosyl-L-homocysteine + 2 H(+). Its function is as follows. Dimethylates a single guanine residue at position 26 of a number of tRNAs using S-adenosyl-L-methionine as donor of the methyl groups. In Halobacterium salinarum (strain ATCC 700922 / JCM 11081 / NRC-1) (Halobacterium halobium), this protein is tRNA (guanine(26)-N(2))-dimethyltransferase.